We begin with the raw amino-acid sequence, 303 residues long: Dihydroorotate dehydrogenase B (NAD(+)), catalytic subunit (303 aa).

FMN is bound by residues Ser21 and 45-46 (KG). Substrate-binding positions include Lys45 and 69 to 73 (NAVGL). FMN-binding residues include Asn99 and Asn127. Residue Asn127 coordinates substrate. Cys130 serves as the catalytic Nucleophile. Positions 165 and 191 each coordinate FMN. 192–193 (NT) provides a ligand contact to substrate. FMN contacts are provided by residues Gly217, 243-244 (GG), and 265-266 (GT).

The protein belongs to the dihydroorotate dehydrogenase family. Type 1 subfamily. In terms of assembly, heterotetramer of 2 PyrK and 2 PyrD type B subunits. It depends on FMN as a cofactor.

It localises to the cytoplasm. The enzyme catalyses (S)-dihydroorotate + NAD(+) = orotate + NADH + H(+). The protein operates within pyrimidine metabolism; UMP biosynthesis via de novo pathway; orotate from (S)-dihydroorotate (NAD(+) route): step 1/1. In terms of biological role, catalyzes the conversion of dihydroorotate to orotate with NAD(+) as electron acceptor. The chain is Dihydroorotate dehydrogenase B (NAD(+)), catalytic subunit (pyrD) from Bacteroides thetaiotaomicron (strain ATCC 29148 / DSM 2079 / JCM 5827 / CCUG 10774 / NCTC 10582 / VPI-5482 / E50).